The chain runs to 783 residues: Endonuclease MutS2 (783 aa).

328-335 is a binding site for ATP; that stretch reads GPNTGGKT. The region spanning 708 to 783 is the Smr domain; that stretch reads LDLRGKRYEE…GSGCTIATLG (76 aa).

Belongs to the DNA mismatch repair MutS family. MutS2 subfamily. Homodimer. Binds to stalled ribosomes, contacting rRNA.

In terms of biological role, endonuclease that is involved in the suppression of homologous recombination and thus may have a key role in the control of bacterial genetic diversity. Its function is as follows. Acts as a ribosome collision sensor, splitting the ribosome into its 2 subunits. Detects stalled/collided 70S ribosomes which it binds and splits by an ATP-hydrolysis driven conformational change. Acts upstream of the ribosome quality control system (RQC), a ribosome-associated complex that mediates the extraction of incompletely synthesized nascent chains from stalled ribosomes and their subsequent degradation. Probably generates substrates for RQC. This Streptococcus thermophilus (strain ATCC BAA-491 / LMD-9) protein is Endonuclease MutS2.